A 291-amino-acid polypeptide reads, in one-letter code: Small ribosomal subunit biogenesis GTPase RsgA (291 aa).

The CP-type G domain occupies 63–221 (HNELKRPPVS…IADTPGFSAL (159 aa)). GTP-binding positions include 112-115 (TKKD) and 164-172 (GQSGVGKST). Residues Cys245, Cys250, His252, and Cys258 each coordinate Zn(2+).

This sequence belongs to the TRAFAC class YlqF/YawG GTPase family. RsgA subfamily. In terms of assembly, monomer. Associates with 30S ribosomal subunit, binds 16S rRNA. Zn(2+) is required as a cofactor.

The protein resides in the cytoplasm. Functionally, one of several proteins that assist in the late maturation steps of the functional core of the 30S ribosomal subunit. Helps release RbfA from mature subunits. May play a role in the assembly of ribosomal proteins into the subunit. Circularly permuted GTPase that catalyzes slow GTP hydrolysis, GTPase activity is stimulated by the 30S ribosomal subunit. The chain is Small ribosomal subunit biogenesis GTPase RsgA from Staphylococcus haemolyticus (strain JCSC1435).